Here is a 232-residue protein sequence, read N- to C-terminus: Ribonuclease 3 (232 aa).

The region spanning 6–133 (FNDIENRLGV…VIAAVYLDKG (128 aa)) is the RNase III domain. A Mg(2+)-binding site is contributed by Glu46. Residue Asp50 is part of the active site. Positions 119 and 122 each coordinate Mg(2+). Residue Glu122 is part of the active site. The region spanning 160–229 (DFKTKLQELL…AKEALKRLEK (70 aa)) is the DRBM domain.

Belongs to the ribonuclease III family. As to quaternary structure, homodimer. Requires Mg(2+) as cofactor.

It is found in the cytoplasm. The catalysed reaction is Endonucleolytic cleavage to 5'-phosphomonoester.. In terms of biological role, digests double-stranded RNA. Involved in the processing of primary rRNA transcript to yield the immediate precursors to the large and small rRNAs (23S and 16S). Processes some mRNAs, and tRNAs when they are encoded in the rRNA operon. Processes pre-crRNA and tracrRNA of type II CRISPR loci if present in the organism. In Clostridium botulinum (strain Eklund 17B / Type B), this protein is Ribonuclease 3.